The following is a 78-amino-acid chain: Translation initiation factor IF-1 (78 aa).

Residues 4–78 (KFNNQAKQDK…LKLGRIIGRK (75 aa)) form the S1-like domain.

It belongs to the IF-1 family. Component of the 30S ribosomal translation pre-initiation complex which assembles on the 30S ribosome in the order IF-2 and IF-3, IF-1 and N-formylmethionyl-tRNA(fMet); mRNA recruitment can occur at any time during PIC assembly.

The protein resides in the cytoplasm. In terms of biological role, one of the essential components for the initiation of protein synthesis. Stabilizes the binding of IF-2 and IF-3 on the 30S subunit to which N-formylmethionyl-tRNA(fMet) subsequently binds. Helps modulate mRNA selection, yielding the 30S pre-initiation complex (PIC). Upon addition of the 50S ribosomal subunit IF-1, IF-2 and IF-3 are released leaving the mature 70S translation initiation complex. The polypeptide is Translation initiation factor IF-1 (Mycoplasma pneumoniae (strain ATCC 29342 / M129 / Subtype 1) (Mycoplasmoides pneumoniae)).